The primary structure comprises 312 residues: UDP-N-acetylenolpyruvoylglucosamine reductase (312 aa).

One can recognise an FAD-binding PCMH-type domain in the interval 37-205 (VGGPADALVV…VCAEFALCPG (169 aa)). Residue Arg-185 is part of the active site. Ser-234 serves as the catalytic Proton donor. The active site involves Glu-304.

It belongs to the MurB family. The cofactor is FAD.

It is found in the cytoplasm. The catalysed reaction is UDP-N-acetyl-alpha-D-muramate + NADP(+) = UDP-N-acetyl-3-O-(1-carboxyvinyl)-alpha-D-glucosamine + NADPH + H(+). It functions in the pathway cell wall biogenesis; peptidoglycan biosynthesis. Functionally, cell wall formation. This chain is UDP-N-acetylenolpyruvoylglucosamine reductase, found in Syntrophus aciditrophicus (strain SB).